The primary structure comprises 411 residues: Aspartate kinase (411 aa).

The ACT domain occupies 265 to 348 (LTIRGVPDTP…KIAKVSIVGV (84 aa)).

Belongs to the aspartokinase family.

Its subcellular location is the cytoplasm. The enzyme catalyses L-aspartate + ATP = 4-phospho-L-aspartate + ADP. The protein operates within amino-acid biosynthesis; L-lysine biosynthesis via DAP pathway; (S)-tetrahydrodipicolinate from L-aspartate: step 1/4. It participates in amino-acid biosynthesis; L-methionine biosynthesis via de novo pathway; L-homoserine from L-aspartate: step 1/3. Its pathway is amino-acid biosynthesis; L-threonine biosynthesis; L-threonine from L-aspartate: step 1/5. With respect to regulation, allosterically feedback inhibited by L-lysine and L-threonine individually and also subject to a concerted feedback inhibition by these amino acids. Functionally, involved in the biosynthesis of L-aspartate-beta-semialdehyde which is a central intermediate in the biosynthesis of different amino acids (L-lysine, L-methionine, L-threonine). Catalyzes the phosphorylation of the beta-carboxyl group of L-aspartate to yield 4-phospho-L-aspartate. This chain is Aspartate kinase, found in Pseudomonas putida (strain ATCC 47054 / DSM 6125 / CFBP 8728 / NCIMB 11950 / KT2440).